Here is a 301-residue protein sequence, read N- to C-terminus: Homoserine kinase (301 aa).

89 to 99 (KPGSGLGSSSA) serves as a coordination point for ATP.

This sequence belongs to the GHMP kinase family. Homoserine kinase subfamily.

The protein localises to the cytoplasm. The catalysed reaction is L-homoserine + ATP = O-phospho-L-homoserine + ADP + H(+). It functions in the pathway amino-acid biosynthesis; L-threonine biosynthesis; L-threonine from L-aspartate: step 4/5. In terms of biological role, catalyzes the ATP-dependent phosphorylation of L-homoserine to L-homoserine phosphate. The chain is Homoserine kinase from Methanococcus maripaludis (strain DSM 14266 / JCM 13030 / NBRC 101832 / S2 / LL).